The primary structure comprises 636 residues: DNA primase (636 aa).

Residues 44–68 form a CHC2-type zinc finger; that stretch reads CPFHDEKTPSFHVRPNHGHFHCFGC. The Toprim domain maps to 266-352; it reads HQAVVVEGYT…SGQSFVAVAA (87 aa). Mg(2+) contacts are provided by E272, D323, and D325. Basic and acidic residues predominate over residues 443 to 459; the sequence is REEAKGGGRKDNNRRGQ. Residues 443–481 are disordered; that stretch reads REEAKGGGRKDNNRRGQETAARPKPPPVQRPDPTDPTLW.

The protein belongs to the DnaG primase family. As to quaternary structure, monomer. Interacts with DnaB. The cofactor is Zn(2+). Mg(2+) serves as cofactor.

It catalyses the reaction ssDNA + n NTP = ssDNA/pppN(pN)n-1 hybrid + (n-1) diphosphate.. Functionally, RNA polymerase that catalyzes the synthesis of short RNA molecules used as primers for DNA polymerase during DNA replication. The sequence is that of DNA primase from Mycolicibacterium smegmatis (strain ATCC 700084 / mc(2)155) (Mycobacterium smegmatis).